We begin with the raw amino-acid sequence, 314 residues long: 3'-5' exoribonuclease YhaM (314 aa).

The HD domain occupies 163–279 (HVVSMLHLAK…LHYIDNLDAK (117 aa)).

This sequence belongs to the YhaM family.

Shows a 3'-5' exoribonuclease activity. The chain is 3'-5' exoribonuclease YhaM from Bacillus pumilus (strain SAFR-032).